Here is a 480-residue protein sequence, read N- to C-terminus: Aromatic-L-amino-acid decarboxylase (480 aa).

Residue Met1 is modified to N-acetylmethionine. Tandem repeats lie at residues 58 to 115 (KDIE…TELE) and 118 to 178 (MMDW…TQAA). The 2 X approximate tandem repeats stretch occupies residues 58-178 (KDIEKIIMPG…AASPEFTQAA (121 aa)). Thr82 contributes to the substrate binding site. The pyridoxal 5'-phosphate site is built by Ala148 and Ser149. Position 192 (His192) interacts with substrate. Residues Thr246 and Asn300 each coordinate pyridoxal 5'-phosphate. Lys303 carries the N6-(pyridoxal phosphate)lysine modification.

Belongs to the group II decarboxylase family. As to quaternary structure, homodimer. The cofactor is pyridoxal 5'-phosphate.

It catalyses the reaction L-dopa + H(+) = dopamine + CO2. It carries out the reaction 5-hydroxy-L-tryptophan + H(+) = serotonin + CO2. The protein operates within catecholamine biosynthesis; dopamine biosynthesis; dopamine from L-tyrosine: step 2/2. Catalyzes the decarboxylation of L-3,4-dihydroxyphenylalanine (DOPA) to dopamine and L-5-hydroxytryptophan to serotonin. The chain is Aromatic-L-amino-acid decarboxylase (Ddc) from Mus musculus (Mouse).